Consider the following 492-residue polypeptide: MDPYKHRPSSAFNSPFWTTNSGAPIWNNNSSLTVGARGPILLEDYHLVEKLANFDRERIPERVVHARGASAKGFFEVTHDISHLTCADFLRAPGVQTPVIVRFSTVIHERGSPETLRDPRGFAVKFYTREGNFDLVGNNLPVFFVRDGMKFPDMVHALKPNPKNHIQENWRILDFFSHFPESLHMFTFLFDDLGVPQDYRHMDGFGVNTYTLINKAGKAVYVKFHWKTTSGIKCLLEEEAIKVGGANHSHATQDLHDSIAAGNYPEWKLFVQTIDPEHEDKFDFDPLDVTKTWPEDIIPLQPVGRLVLNKNIDNFFAENEQLAFCPAIVVPGVYYSDDKMLQTRIFSYADSQRHRLGPNYLQLPANAPKCAHHNNHHEGFMNFIHRDEEVNYFPSRYDPVRHAERFPIPPAICSGRREKCGIEKENNFKQPGERYRSWAPDRQDRFARRWVDALSDPRVTHEIRSVWISYWSQADRSLGQKIASHLSTRPNI.

Active-site residues include His-65 and Asn-138. Tyr-348 provides a ligand contact to heme.

This sequence belongs to the catalase family. As to quaternary structure, homotetramer. The cofactor is heme.

It is found in the peroxisome. The protein localises to the glyoxysome. It catalyses the reaction 2 H2O2 = O2 + 2 H2O. Occurs in almost all aerobically respiring organisms and serves to protect cells from the toxic effects of hydrogen peroxide. This chain is Catalase-4 (CAT4), found in Glycine max (Soybean).